Consider the following 244-residue polypeptide: Histone H1, orphon (244 aa).

A compositionally biased stretch (low complexity) spans 1 to 21 (MSDPAPEIEAPVEAAPVASPP). Disordered stretches follow at residues 1–59 (MSDP…PVSE) and 113–244 (QAKG…KKAK). The span at 35 to 45 (PKAEKPKSDKP) shows a compositional bias: basic and acidic residues. In terms of domain architecture, H15 spans 53–127 (THPPVSEMVV…GASGSFKLPP (75 aa)). Positions 186–203 (AKPASKKAAAPKPKAAKP) are enriched in low complexity. Residues 213-244 (ATKAAAKKPVAKPVAKKPAAKPAKKPAAKKAK) are compositionally biased toward basic residues.

The protein belongs to the histone H1/H5 family.

Its subcellular location is the nucleus. The protein resides in the chromosome. Histones H1 are necessary for the condensation of nucleosome chains into higher-order structures. The chain is Histone H1, orphon from Chironomus thummi thummi (Midge).